Here is a 235-residue protein sequence, read N- to C-terminus: RNA polymerase sigma-E factor (235 aa).

Residues Asp-82–Val-95 carry the Polymerase core binding motif. Residues Gln-202 to Lys-221 constitute a DNA-binding region (H-T-H motif).

The protein belongs to the sigma-70 factor family.

Its function is as follows. Sigma factors are initiation factors that promote the attachment of RNA polymerase to specific initiation sites and are then released. This sigma factor is responsible for the expression of sporulation specific genes. The sequence is that of RNA polymerase sigma-E factor (sigE) from Clostridium acetobutylicum (strain ATCC 824 / DSM 792 / JCM 1419 / IAM 19013 / LMG 5710 / NBRC 13948 / NRRL B-527 / VKM B-1787 / 2291 / W).